Consider the following 350-residue polypeptide: Phenylalanine--tRNA ligase alpha subunit (350 aa).

Mg(2+) is bound at residue Glu260.

The protein belongs to the class-II aminoacyl-tRNA synthetase family. Phe-tRNA synthetase alpha subunit type 1 subfamily. In terms of assembly, tetramer of two alpha and two beta subunits. Requires Mg(2+) as cofactor.

It is found in the cytoplasm. The enzyme catalyses tRNA(Phe) + L-phenylalanine + ATP = L-phenylalanyl-tRNA(Phe) + AMP + diphosphate + H(+). The sequence is that of Phenylalanine--tRNA ligase alpha subunit from Mesoplasma florum (strain ATCC 33453 / NBRC 100688 / NCTC 11704 / L1) (Acholeplasma florum).